Here is a 428-residue protein sequence, read N- to C-terminus: Elongation factor 1-alpha (428 aa).

One can recognise a tr-type G domain in the interval 5 to 215 (KPHVNIVFIG…ALDQIPEPPK (211 aa)). The G1 stretch occupies residues 14 to 21 (GHVDHGKS). 14–21 (GHVDHGKS) lines the GTP pocket. Ser21 serves as a coordination point for Mg(2+). Residues 68-72 (GITID) form a G2 region. The tract at residues 89-92 (DAPG) is G3. Residues 89–93 (DAPGH) and 144–147 (NKMD) contribute to the GTP site. The interval 144–147 (NKMD) is G4. The interval 181–183 (SAW) is G5.

This sequence belongs to the TRAFAC class translation factor GTPase superfamily. Classic translation factor GTPase family. EF-Tu/EF-1A subfamily.

The protein localises to the cytoplasm. The enzyme catalyses GTP + H2O = GDP + phosphate + H(+). In terms of biological role, GTP hydrolase that promotes the GTP-dependent binding of aminoacyl-tRNA to the A-site of ribosomes during protein biosynthesis. This chain is Elongation factor 1-alpha, found in Thermococcus kodakarensis (strain ATCC BAA-918 / JCM 12380 / KOD1) (Pyrococcus kodakaraensis (strain KOD1)).